The sequence spans 150 residues: Endoribonuclease YbeY (150 aa).

Zn(2+) contacts are provided by H102, H106, and H112.

It belongs to the endoribonuclease YbeY family. Requires Zn(2+) as cofactor.

It is found in the cytoplasm. In terms of biological role, single strand-specific metallo-endoribonuclease involved in late-stage 70S ribosome quality control and in maturation of the 3' terminus of the 16S rRNA. This is Endoribonuclease YbeY from Thermotoga sp. (strain RQ2).